Here is a 361-residue protein sequence, read N- to C-terminus: Phosphoserine aminotransferase (361 aa).

R42 provides a ligand contact to L-glutamate. Pyridoxal 5'-phosphate-binding positions include 76 to 77, W102, T153, D173, and Q196; that span reads AR. K197 is subject to N6-(pyridoxal phosphate)lysine. Residue 238–239 coordinates pyridoxal 5'-phosphate; sequence NT.

This sequence belongs to the class-V pyridoxal-phosphate-dependent aminotransferase family. SerC subfamily. In terms of assembly, homodimer. Pyridoxal 5'-phosphate is required as a cofactor.

The protein resides in the cytoplasm. The catalysed reaction is O-phospho-L-serine + 2-oxoglutarate = 3-phosphooxypyruvate + L-glutamate. It catalyses the reaction 4-(phosphooxy)-L-threonine + 2-oxoglutarate = (R)-3-hydroxy-2-oxo-4-phosphooxybutanoate + L-glutamate. It participates in amino-acid biosynthesis; L-serine biosynthesis; L-serine from 3-phospho-D-glycerate: step 2/3. Its pathway is cofactor biosynthesis; pyridoxine 5'-phosphate biosynthesis; pyridoxine 5'-phosphate from D-erythrose 4-phosphate: step 3/5. In terms of biological role, catalyzes the reversible conversion of 3-phosphohydroxypyruvate to phosphoserine and of 3-hydroxy-2-oxo-4-phosphonooxybutanoate to phosphohydroxythreonine. This chain is Phosphoserine aminotransferase, found in Buchnera aphidicola subsp. Acyrthosiphon pisum (strain 5A).